Reading from the N-terminus, the 415-residue chain is Phosphoglycerate kinase (415 aa).

(2R)-3-phosphoglycerate is bound by residues valine 22, aspartate 23, phenylalanine 24, asparagine 25, glutamine 37, arginine 38, serine 61, histidine 62, glycine 64, arginine 65, arginine 121, histidine 168, and arginine 169. Glycine 212 provides a ligand contact to ADP. Residue glycine 212 participates in CDP binding. AMP contacts are provided by alanine 213 and lysine 214. Alanine 213 serves as a coordination point for ATP. Position 213 (alanine 213) interacts with Mg(2+). Alanine 216 and aspartate 217 together coordinate Mg(2+). Aspartate 217 provides a ligand contact to CDP. Residue lysine 218 participates in AMP binding. Position 218 (lysine 218) interacts with ATP. Residue glycine 236 coordinates ADP. Glycine 236 provides a ligand contact to CDP. Residues glycine 237 and glycine 311 each contribute to the AMP site. ATP contacts are provided by glycine 237 and glycine 311. CDP contacts are provided by glycine 336 and phenylalanine 341. Phenylalanine 341 is a binding site for ADP. An AMP-binding site is contributed by glutamate 342. ATP-binding residues include glutamate 342, aspartate 373, and threonine 374. Position 373 (aspartate 373) interacts with Mg(2+).

The protein belongs to the phosphoglycerate kinase family. In terms of assembly, monomer. It depends on Mg(2+) as a cofactor.

It localises to the cytoplasm. The catalysed reaction is (2R)-3-phosphoglycerate + ATP = (2R)-3-phospho-glyceroyl phosphate + ADP. The protein operates within carbohydrate degradation; glycolysis; pyruvate from D-glyceraldehyde 3-phosphate: step 2/5. Its function is as follows. Enzyme of the glycolytic pathway. Glycolysis is essential in glial cells but not in neurons; neurons rely on the citric acid cycle for their energy needs, and on lactate and alanine secreted into the hemolymph by glial cells to fuel it. The chain is Phosphoglycerate kinase from Drosophila melanogaster (Fruit fly).